Here is a 746-residue protein sequence, read N- to C-terminus: Zinc finger protein 366 (746 aa).

The tract at residues 1–64 (MQKAMKMVKD…FRYEPSPGDL (64 aa)) is disordered. 11 C2H2-type zinc fingers span residues 250 to 272 (WQCP…ILGH), 278 to 300 (HACS…MLTH), 306 to 328 (HKCQ…MMQH), 334 to 356 (HNCR…EAKH), 362 to 384 (NICV…LTTH), 390 to 412 (YNCS…MMKH), 418 to 440 (YICS…SLTH), 446 to 468 (HKCG…VLIH), 474 to 496 (YQCH…MIVH), 502 to 524 (FKCK…LHLH), and 530 to 553 (FKCL…KVKH). Residues 452-746 (GREFTLLANM…MEKQAVLLGI (295 aa)) are interaction with NRIP1. Positions 587–591 (PFDLS) match the PXDLS motif. Positions 587–689 (PFDLSQKRSA…DHEGSDIDCE (103 aa)) are disordered. The segment covering 613-627 (CQEEEEEAGEEDNCY) has biased composition (acidic residues). Positions 675–689 (EDRSEDHEGSDIDCE) are enriched in basic and acidic residues.

In terms of assembly, interacts with ESR1 and NRIP1. Interacts (via PXDLS motif) with CTBP1. Expressed in immature and mature dendritic cells (DCs).

Its subcellular location is the nucleus. In terms of biological role, has transcriptional repression activity. Acts as a corepressor of ESR1; the function seems to involve CTBP1 and histone deacetylases. This chain is Zinc finger protein 366, found in Mus musculus (Mouse).